A 131-amino-acid polypeptide reads, in one-letter code: Peptide methionine sulfoxide reductase MsrB (131 aa).

The MsrB domain maps to 8–130 (LEEWRAMLDP…NSVCLDLVPR (123 aa)). Residues Cys-47, Cys-50, Cys-96, and Cys-99 each contribute to the Zn(2+) site. Catalysis depends on Cys-119, which acts as the Nucleophile.

The protein belongs to the MsrB Met sulfoxide reductase family. Requires Zn(2+) as cofactor.

The catalysed reaction is L-methionyl-[protein] + [thioredoxin]-disulfide + H2O = L-methionyl-(R)-S-oxide-[protein] + [thioredoxin]-dithiol. The polypeptide is Peptide methionine sulfoxide reductase MsrB (Pseudomonas fluorescens (strain Pf0-1)).